The following is a 280-amino-acid chain: Shikimate dehydrogenase (NADP(+)) (280 aa).

Shikimate is bound by residues 15-17 (SLS) and threonine 62. Lysine 66 functions as the Proton acceptor in the catalytic mechanism. Residues asparagine 88 and aspartate 104 each contribute to the shikimate site. Residues 128 to 132 (GAGGA), 151 to 156 (NRTEER), and isoleucine 222 each bind NADP(+). A shikimate-binding site is contributed by tyrosine 224. Glycine 245 is an NADP(+) binding site.

Belongs to the shikimate dehydrogenase family. As to quaternary structure, homodimer.

It carries out the reaction shikimate + NADP(+) = 3-dehydroshikimate + NADPH + H(+). Its pathway is metabolic intermediate biosynthesis; chorismate biosynthesis; chorismate from D-erythrose 4-phosphate and phosphoenolpyruvate: step 4/7. Functionally, involved in the biosynthesis of the chorismate, which leads to the biosynthesis of aromatic amino acids. Catalyzes the reversible NADPH linked reduction of 3-dehydroshikimate (DHSA) to yield shikimate (SA). This is Shikimate dehydrogenase (NADP(+)) from Methanosarcina mazei (strain ATCC BAA-159 / DSM 3647 / Goe1 / Go1 / JCM 11833 / OCM 88) (Methanosarcina frisia).